The following is a 953-amino-acid chain: Translation initiation factor IF-2 (953 aa).

Disordered regions lie at residues 52–241 (KASK…QQEA) and 279–363 (TKLK…TERK). Composition is skewed to basic and acidic residues over residues 80–89 (TGSEHVEKTQ), 98–111 (FKAE…EQAA), and 140–188 (QGDK…ENHK). The segment covering 191 to 207 (RFTNQKKQGRQEPQSKS) has biased composition (polar residues). Residues 229 to 241 (RQSETRFRAQQEA) are compositionally biased toward basic and acidic residues. Polar residues predominate over residues 282 to 291 (KSSNISAKST). Basic and acidic residues predominate over residues 300 to 317 (ARPEKNRELTHHSQEGQK). Residues 322-338 (SWNSQNQVRNQKNSNWN) show a composition bias toward low complexity. Positions 339–348 (KNKKTKKGKN) are enriched in basic residues. The region spanning 454-623 (ERAPVVTIMG…LLVAEVEELK (170 aa)) is the tr-type G domain. Residues 463 to 470 (GHVDHGKT) are G1. 463–470 (GHVDHGKT) contributes to the GTP binding site. Residues 488 to 492 (GITQH) are G2. Positions 509-512 (DTPG) are G3. GTP contacts are provided by residues 509–513 (DTPGH) and 563–566 (NKID). Residues 563–566 (NKID) are G4. Residues 599-601 (SAK) form a G5 region.

Belongs to the TRAFAC class translation factor GTPase superfamily. Classic translation factor GTPase family. IF-2 subfamily.

The protein resides in the cytoplasm. Its function is as follows. One of the essential components for the initiation of protein synthesis. Protects formylmethionyl-tRNA from spontaneous hydrolysis and promotes its binding to the 30S ribosomal subunits. Also involved in the hydrolysis of GTP during the formation of the 70S ribosomal complex. The chain is Translation initiation factor IF-2 from Streptococcus pyogenes serotype M4 (strain MGAS10750).